The following is a 465-amino-acid chain: ATP-dependent protease ATPase subunit HslU (465 aa).

Residues valine 19, 61-66 (GVGKTE), aspartate 277, glutamate 343, and arginine 415 each bind ATP.

It belongs to the ClpX chaperone family. HslU subfamily. In terms of assembly, a double ring-shaped homohexamer of HslV is capped on each side by a ring-shaped HslU homohexamer. The assembly of the HslU/HslV complex is dependent on binding of ATP.

The protein localises to the cytoplasm. Its function is as follows. ATPase subunit of a proteasome-like degradation complex; this subunit has chaperone activity. The binding of ATP and its subsequent hydrolysis by HslU are essential for unfolding of protein substrates subsequently hydrolyzed by HslV. HslU recognizes the N-terminal part of its protein substrates and unfolds these before they are guided to HslV for hydrolysis. This chain is ATP-dependent protease ATPase subunit HslU, found in Geobacillus sp. (strain WCH70).